The following is a 356-amino-acid chain: Putative KilA-N domain-containing protein R878 (356 aa).

Positions M1–K12 are enriched in basic residues. Positions M1–Y114 are disordered. Positions S14–K46 are enriched in low complexity. The segment covering S66 to Y114 has biased composition (acidic residues). The 110-residue stretch at N130–W239 folds into the KilA-N domain.

This chain is Putative KilA-N domain-containing protein R878, found in Acanthamoeba polyphaga (Amoeba).